Consider the following 423-residue polypeptide: Acetylornithine aminotransferase, mitochondrial (423 aa).

Residue K276 is modified to N6-(pyridoxal phosphate)lysine.

It belongs to the class-III pyridoxal-phosphate-dependent aminotransferase family. Pyridoxal 5'-phosphate serves as cofactor.

The protein localises to the mitochondrion matrix. The enzyme catalyses N(2)-acetyl-L-ornithine + 2-oxoglutarate = N-acetyl-L-glutamate 5-semialdehyde + L-glutamate. The protein operates within amino-acid biosynthesis; L-arginine biosynthesis; N(2)-acetyl-L-ornithine from L-glutamate: step 4/4. This Eremothecium gossypii (strain ATCC 10895 / CBS 109.51 / FGSC 9923 / NRRL Y-1056) (Yeast) protein is Acetylornithine aminotransferase, mitochondrial (ARG8).